We begin with the raw amino-acid sequence, 689 residues long: Glycine--tRNA ligase beta subunit (689 aa).

This sequence belongs to the class-II aminoacyl-tRNA synthetase family. Tetramer of two alpha and two beta subunits.

Its subcellular location is the cytoplasm. The enzyme catalyses tRNA(Gly) + glycine + ATP = glycyl-tRNA(Gly) + AMP + diphosphate. The protein is Glycine--tRNA ligase beta subunit of Pseudoalteromonas translucida (strain TAC 125).